A 430-amino-acid polypeptide reads, in one-letter code: Dihydrolipoyllysine-residue acetyltransferase component of pyruvate dehydrogenase complex (430 aa).

Residues 2–77 (AFEFRLPDIG…VVGDVIVKID (76 aa)) enclose the Lipoyl-binding domain. Residue Lys-43 is modified to N6-lipoyllysine. The tract at residues 80–122 (DAEDMQFKGHDDDSSSKEEPAKEEAPAEQAPVATQTEEVDENR) is disordered. The segment covering 84-104 (MQFKGHDDDSSSKEEPAKEEA) has biased composition (basic and acidic residues). A Peripheral subunit-binding (PSBD) domain is found at 125-162 (KAMPSVRKYAREKGVNIKAVSGSGKNGRITKEDVDAYL). A disordered region spans residues 164–199 (GGAPTASNESAASATSEEVAETPAAPAAVSLEGDFP). Residues 166-193 (APTASNESAASATSEEVAETPAAPAAVS) are compositionally biased toward low complexity. Residue His-401 is part of the active site.

The protein belongs to the 2-oxoacid dehydrogenase family. Forms a 24-polypeptide structural core with octahedral symmetry. The cofactor is (R)-lipoate.

The enzyme catalyses N(6)-[(R)-dihydrolipoyl]-L-lysyl-[protein] + acetyl-CoA = N(6)-[(R)-S(8)-acetyldihydrolipoyl]-L-lysyl-[protein] + CoA. Its function is as follows. The pyruvate dehydrogenase complex catalyzes the overall conversion of pyruvate to acetyl-CoA and CO(2). It contains multiple copies of three enzymatic components: pyruvate dehydrogenase (E1), dihydrolipoamide acetyltransferase (E2) and lipoamide dehydrogenase (E3). This chain is Dihydrolipoyllysine-residue acetyltransferase component of pyruvate dehydrogenase complex (pdhC), found in Staphylococcus aureus (strain Mu50 / ATCC 700699).